A 275-amino-acid polypeptide reads, in one-letter code: Large ribosomal subunit protein uL2 (275 aa).

Positions Gly-222–Lys-275 are disordered. The span at Asp-229 to Asn-239 shows a compositional bias: basic and acidic residues.

Belongs to the universal ribosomal protein uL2 family. As to quaternary structure, part of the 50S ribosomal subunit. Forms a bridge to the 30S subunit in the 70S ribosome.

Its function is as follows. One of the primary rRNA binding proteins. Required for association of the 30S and 50S subunits to form the 70S ribosome, for tRNA binding and peptide bond formation. It has been suggested to have peptidyltransferase activity; this is somewhat controversial. Makes several contacts with the 16S rRNA in the 70S ribosome. The protein is Large ribosomal subunit protein uL2 of Psychrobacter cryohalolentis (strain ATCC BAA-1226 / DSM 17306 / VKM B-2378 / K5).